We begin with the raw amino-acid sequence, 127 residues long: Cliotide T3 (127 aa).

The N-terminal stretch at 1–24 (MAYVRLTSLAVLFFLAASVMKTEG) is a signal peptide. Residues 25-53 (GLPTCGETCTLGTCYVPDCSCSWPICMKN) constitute a cross-link (cyclopeptide (Gly-Asn)). Cystine bridges form between Cys29-Cys43, Cys33-Cys45, and Cys38-Cys50. A propeptide spans 54-127 (HIIAANAKTV…DLKMPLESTN (74 aa)) (removed in mature form).

In terms of processing, contains 3 disulfide bonds. Post-translationally, this is a cyclic peptide. In terms of tissue distribution, expressed in flower, stem, shoot, leaf and seed but not in root, pod and nodule (at protein level).

In terms of biological role, probably participates in a plant defense mechanism. Not active against Gram-negative bacteria E.coli ATCC 700926, K.pneumoniae ATTC 13883 and P.aeruginosa ATCC 39018 at concentration up to 100 uM. Has cytotoxic and hemolytic activity. The chain is Cliotide T3 from Clitoria ternatea (Butterfly pea).